A 157-amino-acid chain; its full sequence is S-ribosylhomocysteine lyase (157 aa).

H53, H57, and C124 together coordinate Fe cation.

This sequence belongs to the LuxS family. Homodimer. Fe cation is required as a cofactor.

The enzyme catalyses S-(5-deoxy-D-ribos-5-yl)-L-homocysteine = (S)-4,5-dihydroxypentane-2,3-dione + L-homocysteine. Involved in the synthesis of autoinducer 2 (AI-2) which is secreted by bacteria and is used to communicate both the cell density and the metabolic potential of the environment. The regulation of gene expression in response to changes in cell density is called quorum sensing. Catalyzes the transformation of S-ribosylhomocysteine (RHC) to homocysteine (HC) and 4,5-dihydroxy-2,3-pentadione (DPD). This Borreliella afzelii (strain PKo) (Borrelia afzelii) protein is S-ribosylhomocysteine lyase.